A 72-amino-acid polypeptide reads, in one-letter code: Translation initiation factor IF-1 2 (72 aa).

In terms of domain architecture, S1-like spans 1–72; sequence MAKDDVIQMQ…SRARIVFRTK (72 aa).

It belongs to the IF-1 family. As to quaternary structure, component of the 30S ribosomal translation pre-initiation complex which assembles on the 30S ribosome in the order IF-2 and IF-3, IF-1 and N-formylmethionyl-tRNA(fMet); mRNA recruitment can occur at any time during PIC assembly.

It is found in the cytoplasm. In terms of biological role, one of the essential components for the initiation of protein synthesis. Stabilizes the binding of IF-2 and IF-3 on the 30S subunit to which N-formylmethionyl-tRNA(fMet) subsequently binds. Helps modulate mRNA selection, yielding the 30S pre-initiation complex (PIC). Upon addition of the 50S ribosomal subunit IF-1, IF-2 and IF-3 are released leaving the mature 70S translation initiation complex. The sequence is that of Translation initiation factor IF-1 2 from Cupriavidus metallidurans (strain ATCC 43123 / DSM 2839 / NBRC 102507 / CH34) (Ralstonia metallidurans).